A 60-amino-acid polypeptide reads, in one-letter code: Large ribosomal subunit protein bL32 (60 aa).

This sequence belongs to the bacterial ribosomal protein bL32 family.

The polypeptide is Large ribosomal subunit protein bL32 (Fervidobacterium nodosum (strain ATCC 35602 / DSM 5306 / Rt17-B1)).